We begin with the raw amino-acid sequence, 183 residues long: Bifunctional protein PyrR (183 aa).

The short motif at 102–114 is the PRPP-binding element; it reads VVLVDDVLYTGRT.

The protein belongs to the purine/pyrimidine phosphoribosyltransferase family. PyrR subfamily. In terms of assembly, homodimer and homohexamer; in equilibrium.

It carries out the reaction UMP + diphosphate = 5-phospho-alpha-D-ribose 1-diphosphate + uracil. Its function is as follows. Regulates transcriptional attenuation of the pyrimidine nucleotide (pyr) operon by binding in a uridine-dependent manner to specific sites on pyr mRNA. This disrupts an antiterminator hairpin in the RNA and favors formation of a downstream transcription terminator, leading to a reduced expression of downstream genes. Also displays a weak uracil phosphoribosyltransferase activity which is not physiologically significant. The protein is Bifunctional protein PyrR of Listeria monocytogenes serotype 4b (strain CLIP80459).